We begin with the raw amino-acid sequence, 88 residues long: Small ribosomal subunit protein uS17 (88 aa).

Belongs to the universal ribosomal protein uS17 family. In terms of assembly, part of the 30S ribosomal subunit.

In terms of biological role, one of the primary rRNA binding proteins, it binds specifically to the 5'-end of 16S ribosomal RNA. The chain is Small ribosomal subunit protein uS17 from Pseudomonas entomophila (strain L48).